Consider the following 362-residue polypeptide: Phosphoserine aminotransferase (362 aa).

L-glutamate contacts are provided by Ser9 and Arg42. Pyridoxal 5'-phosphate-binding positions include 76-77, Trp102, Thr153, Asp174, and Gln197; that span reads GR. N6-(pyridoxal phosphate)lysine is present on Lys198. Pyridoxal 5'-phosphate is bound at residue 239–240; sequence NT.

It belongs to the class-V pyridoxal-phosphate-dependent aminotransferase family. SerC subfamily. As to quaternary structure, homodimer. The cofactor is pyridoxal 5'-phosphate.

It is found in the cytoplasm. The enzyme catalyses O-phospho-L-serine + 2-oxoglutarate = 3-phosphooxypyruvate + L-glutamate. The catalysed reaction is 4-(phosphooxy)-L-threonine + 2-oxoglutarate = (R)-3-hydroxy-2-oxo-4-phosphooxybutanoate + L-glutamate. The protein operates within amino-acid biosynthesis; L-serine biosynthesis; L-serine from 3-phospho-D-glycerate: step 2/3. It participates in cofactor biosynthesis; pyridoxine 5'-phosphate biosynthesis; pyridoxine 5'-phosphate from D-erythrose 4-phosphate: step 3/5. In terms of biological role, catalyzes the reversible conversion of 3-phosphohydroxypyruvate to phosphoserine and of 3-hydroxy-2-oxo-4-phosphonooxybutanoate to phosphohydroxythreonine. This chain is Phosphoserine aminotransferase, found in Escherichia coli O17:K52:H18 (strain UMN026 / ExPEC).